Here is a 284-residue protein sequence, read N- to C-terminus: MNAWNTIYDQFNPIAFSLGSIEVHWYGLAYACAIVVAFYMALRMIQKDPKRFPIERKEFESYFLWAELGIVLGARVGYILIYEPNSSYYLTHFWQIFNPFDSHGNFVGIRGMSYHGGLVGFLIASYLYSRKDLKKLLIYLDLIAISLPLGYVFGRIGNFLNQELVGRIVPKDSHLGQIIGIMVDHQLRYPSQLIEAFLEGVIVFLMVMWAKKHTKTHGLLIVVYGLGYSLMRFIAEFYREPDSQMGVYFLNLSMGQILSLFMVIVSLGILLYATKNSKKIKENQ.

The next 7 helical transmembrane spans lie at 21-41 (IEVHWYGLAYACAIVVAFYMA), 62-82 (YFLWAELGIVLGARVGYILIY), 106-126 (FVGIRGMSYHGGLVGFLIASY), 136-156 (LLIYLDLIAISLPLGYVFGRI), 190-210 (PSQLIEAFLEGVIVFLMVMWA), 218-238 (GLLIVVYGLGYSLMRFIAEFY), and 252-272 (LSMGQILSLFMVIVSLGILLY). R155 is an a 1,2-diacyl-sn-glycero-3-phospho-(1'-sn-glycerol) binding site.

Belongs to the Lgt family.

The protein resides in the cell inner membrane. The enzyme catalyses L-cysteinyl-[prolipoprotein] + a 1,2-diacyl-sn-glycero-3-phospho-(1'-sn-glycerol) = an S-1,2-diacyl-sn-glyceryl-L-cysteinyl-[prolipoprotein] + sn-glycerol 1-phosphate + H(+). It functions in the pathway protein modification; lipoprotein biosynthesis (diacylglyceryl transfer). Functionally, catalyzes the transfer of the diacylglyceryl group from phosphatidylglycerol to the sulfhydryl group of the N-terminal cysteine of a prolipoprotein, the first step in the formation of mature lipoproteins. This Helicobacter pylori (strain P12) protein is Phosphatidylglycerol--prolipoprotein diacylglyceryl transferase.